A 405-amino-acid chain; its full sequence is Cellobiose 2-epimerase (405 aa).

It belongs to the cellobiose 2-epimerase family.

It carries out the reaction D-cellobiose = beta-D-glucosyl-(1-&gt;4)-D-mannopyranose. In terms of biological role, catalyzes the reversible epimerization of cellobiose to 4-O-beta-D-glucopyranosyl-D-mannose (Glc-Man). Can also epimerize lactose to epilactose. The protein is Cellobiose 2-epimerase (ce13) of Eubacterium cellulosolvens.